Reading from the N-terminus, the 248-residue chain is 3-oxoacyl-[acyl-carrier-protein] reductase FabG (248 aa).

NADP(+) is bound by residues 14 to 17 (GGSR), 65 to 66 (DV), and Asn92. Ser144 serves as a coordination point for substrate. Catalysis depends on Tyr157, which acts as the Proton acceptor. Residues 157–161 (YAAAK) and Ile190 contribute to the NADP(+) site.

Belongs to the short-chain dehydrogenases/reductases (SDR) family. As to quaternary structure, homotetramer.

It carries out the reaction a (3R)-hydroxyacyl-[ACP] + NADP(+) = a 3-oxoacyl-[ACP] + NADPH + H(+). Its pathway is lipid metabolism; fatty acid biosynthesis. In terms of biological role, catalyzes the NADPH-dependent reduction of beta-ketoacyl-ACP substrates to beta-hydroxyacyl-ACP products, the first reductive step in the elongation cycle of fatty acid biosynthesis. This chain is 3-oxoacyl-[acyl-carrier-protein] reductase FabG (fabG), found in Chlamydia muridarum (strain MoPn / Nigg).